The sequence spans 460 residues: UDP-N-acetylmuramoylalanine--D-glutamate ligase (460 aa).

Residue G120–T126 participates in ATP binding.

It belongs to the MurCDEF family.

It localises to the cytoplasm. It carries out the reaction UDP-N-acetyl-alpha-D-muramoyl-L-alanine + D-glutamate + ATP = UDP-N-acetyl-alpha-D-muramoyl-L-alanyl-D-glutamate + ADP + phosphate + H(+). Its pathway is cell wall biogenesis; peptidoglycan biosynthesis. Functionally, cell wall formation. Catalyzes the addition of glutamate to the nucleotide precursor UDP-N-acetylmuramoyl-L-alanine (UMA). The chain is UDP-N-acetylmuramoylalanine--D-glutamate ligase from Lactobacillus johnsonii (strain CNCM I-12250 / La1 / NCC 533).